The sequence spans 217 residues: 3,4-dihydroxy-2-butanone 4-phosphate synthase (217 aa).

D-ribulose 5-phosphate is bound by residues 37–38 (RE), D42, 150–154 (RGGHT), and E174. Mg(2+) is bound at residue E38. H153 is a Mg(2+) binding site.

It belongs to the DHBP synthase family. Homodimer. Mg(2+) serves as cofactor. Mn(2+) is required as a cofactor.

It catalyses the reaction D-ribulose 5-phosphate = (2S)-2-hydroxy-3-oxobutyl phosphate + formate + H(+). It functions in the pathway cofactor biosynthesis; riboflavin biosynthesis; 2-hydroxy-3-oxobutyl phosphate from D-ribulose 5-phosphate: step 1/1. Catalyzes the conversion of D-ribulose 5-phosphate to formate and 3,4-dihydroxy-2-butanone 4-phosphate. The chain is 3,4-dihydroxy-2-butanone 4-phosphate synthase from Salmonella arizonae (strain ATCC BAA-731 / CDC346-86 / RSK2980).